The following is a 195-amino-acid chain: Elongation factor P (195 aa).

Belongs to the elongation factor P family.

The protein localises to the cytoplasm. Its pathway is protein biosynthesis; polypeptide chain elongation. In terms of biological role, involved in peptide bond synthesis. Stimulates efficient translation and peptide-bond synthesis on native or reconstituted 70S ribosomes in vitro. Probably functions indirectly by altering the affinity of the ribosome for aminoacyl-tRNA, thus increasing their reactivity as acceptors for peptidyl transferase. The chain is Elongation factor P from Rhodopirellula baltica (strain DSM 10527 / NCIMB 13988 / SH1).